The primary structure comprises 580 residues: PX domain-containing protein kinase-like protein (580 aa).

The PX domain maps to 14–126 (LDDTVPLTAA…KFLDPNNYSA (113 aa)). The region spanning 88-481 (FIAERQKGLQ…VENSEEQPVK (394 aa)) is the Protein kinase domain. Residues 433–551 (EQKQIHQHRR…LPQAVNGVNR (119 aa)) form a disordered region. Basic residues-rich tracts occupy residues 437 to 448 (IHQHRRLTRAQS) and 457 to 469 (KRRK…KSKR). Low complexity predominate over residues 483–514 (SNANNSAGSGASSPLTSPSSPTPPSTAGLSSA). Residues 515 to 531 (LPPPPPPPPPPPPPAGP) show a composition bias toward pro residues. Residues 549-568 (VNRGALLSSIQNFQKGTLRK) form the WH2 domain.

Belongs to the protein kinase superfamily.

Its subcellular location is the cytoplasm. It localises to the cell membrane. Binds to and modulates brain Na,K-ATPase subunits ATP1B1 and ATP1B3 and may thereby participate in the regulation of electrical excitability and synaptic transmission. May not display kinase activity. This is PX domain-containing protein kinase-like protein from Rattus norvegicus (Rat).